The primary structure comprises 248 residues: Protein LIFEGUARD 3 (248 aa).

A run of 7 helical transmembrane segments spans residues 42–62 (VYSIIAFQLLATVAVAATVVT), 74–94 (GLGLALYIVIIITPLIVLCPL), 105–125 (YLLLGIFTLALAFVVGLTCAF), 130–150 (VILESVILTSVVVLSLTLYTF), 165–185 (FLFGALTVLIFFALIQILFPL), 188–208 (VSVMIYGCLVSIIFCGYIVYD), and 222–242 (IWAAVSLYLDIINLFLYLLTV).

The protein belongs to the BI1 family.

It is found in the membrane. The protein is Protein LIFEGUARD 3 of Arabidopsis thaliana (Mouse-ear cress).